Here is a 1218-residue protein sequence, read N- to C-terminus: Coatomer subunit alpha-3 (1218 aa).

WD repeat units lie at residues 7–48 (TKSN…DRFD), 49–88 (EHDG…CLFT), 91–132 (GHLD…AVLT), 133–172 (GHNH…KKTV), 202–241 (GHDR…AWEV), 246–285 (GHMN…GIQT), 288–326 (REHD…PAFS), 363–404 (SLNQ…AGRT), and 450–489 (PLPI…GELQ). The disordered stretch occupies residues 854 to 893 (AMANGGDGFDAEEGEANEEDGEEGGWDLEDLELPPEAETP). Positions 862–888 (FDAEEGEANEEDGEEGGWDLEDLELPP) are enriched in acidic residues.

In terms of assembly, oligomeric complex that consists of at least the alpha, beta, beta', gamma, delta, epsilon and zeta subunits.

It localises to the cytoplasm. The protein resides in the golgi apparatus membrane. It is found in the cytoplasmic vesicle. The protein localises to the COPI-coated vesicle membrane. In terms of biological role, the coatomer is a cytosolic protein complex that binds to dilysine motifs and reversibly associates with Golgi non-clathrin-coated vesicles, which further mediate biosynthetic protein transport from the ER, via the Golgi up to the trans Golgi network. Coatomer complex is required for budding from Golgi membranes, and is essential for the retrograde Golgi-to-ER transport of dilysine-tagged proteins. This is Coatomer subunit alpha-3 from Oryza sativa subsp. japonica (Rice).